Here is a 294-residue protein sequence, read N- to C-terminus: Bifunctional protein FolD (294 aa).

NADP(+) is bound by residues 166–168, S191, and I232; that span reads GRS.

This sequence belongs to the tetrahydrofolate dehydrogenase/cyclohydrolase family. Homodimer.

It carries out the reaction (6R)-5,10-methylene-5,6,7,8-tetrahydrofolate + NADP(+) = (6R)-5,10-methenyltetrahydrofolate + NADPH. The catalysed reaction is (6R)-5,10-methenyltetrahydrofolate + H2O = (6R)-10-formyltetrahydrofolate + H(+). It participates in one-carbon metabolism; tetrahydrofolate interconversion. In terms of biological role, catalyzes the oxidation of 5,10-methylenetetrahydrofolate to 5,10-methenyltetrahydrofolate and then the hydrolysis of 5,10-methenyltetrahydrofolate to 10-formyltetrahydrofolate. The chain is Bifunctional protein FolD from Bradyrhizobium diazoefficiens (strain JCM 10833 / BCRC 13528 / IAM 13628 / NBRC 14792 / USDA 110).